Here is a 145-residue protein sequence, read N- to C-terminus: Secreted RxLR effector protein PSE1 (145 aa).

The first 21 residues, 1-21 (MRLSSFIVVGAAVVNLLTSGS), serve as a signal peptide directing secretion. The RxLR-dEER signature appears at 53 to 73 (RLLRYHSNNNRGGDEDIAEER).

This sequence belongs to the RxLR effector family.

It localises to the secreted. Its subcellular location is the host cell. Functionally, secreted effector that impairs both plant effector-triggered immunity and pathogen-associated molecular patterns (PAMP)-triggered immunity (PTI). Suppresses plant cell death as a part of the plant defense responses. Facilitates plant infection by altering the auxin content at the roots penetration points of the of the pathogen. The polypeptide is Secreted RxLR effector protein PSE1 (Phytophthora nicotianae (Potato buckeye rot agent)).